A 218-amino-acid chain; its full sequence is Claudin-5 (218 aa).

At 1-7 (MGSAALE) the chain is on the cytoplasmic side. The chain crosses the membrane as a helical span at residues 8–28 (ILGLVLCLVGWGGLILACGLP). Over 29 to 81 (MWQVTAFLDHNIVTAQTTWKGLWMSCVVQSTGHMQCKVYDSVLALSTEVQAAR) the chain is Extracellular. The chain crosses the membrane as a helical span at residues 82 to 102 (ALTVSAVLLAFVALFVTLAGA). At 103–122 (QCTTCVAPGPAKARVALTGG) the chain is on the cytoplasmic side. The chain crosses the membrane as a helical span at residues 123–143 (VLYLFCGLLALVPLCWFANIV). Residues 144 to 159 (VREFYDPSVPVSQKYE) are Extracellular-facing. Residues 160–180 (LGAALYIGWAATALLMVGGCL) form a helical membrane-spanning segment. The Cytoplasmic segment spans residues 181-218 (LCCGAWVCTGRPDLSFPVKYSAPRRPTATGDYDKKNYV). Residues 217–218 (YV) are interactions with TJP1, TJP2 and TJP3.

It belongs to the claudin family. As to quaternary structure, directly interacts with TJP1/ZO-1, TJP2/ZO-2 and TJP3/ZO-3. Interacts with MPDZ.

Its subcellular location is the cell junction. The protein localises to the tight junction. It localises to the cell membrane. Functionally, plays a major role in tight junction-specific obliteration of the intercellular space. The chain is Claudin-5 (CLDN5) from Homo sapiens (Human).